The following is a 341-amino-acid chain: Twinfilin-2 (341 aa).

2 consecutive ADF-H domains span residues 1 to 131 and 169 to 305; these read ATEE…KHLS and GLAF…DEVH. Residue Lys-6 is modified to N6-acetyllysine. At Tyr-301 the chain carries Phosphotyrosine. Residues 314 to 341 form a disordered region; it reads AFAKPKGPGGKRGHKRLIRGPGENGDDS. Basic residues predominate over residues 322-331; it reads GGKRGHKRLI. At Ser-341 the chain carries Phosphoserine.

Belongs to the actin-binding proteins ADF family. Twinfilin subfamily. As to quaternary structure, interacts with G-actin; ADP-actin form and capping protein (CP). May also be able to interact with TWF1 and phosphoinositides, PI(4,5)P2. When bound to PI(4,5)P2, it is down-regulated. Interacts with MYO7A. Post-translationally, phosphorylated on both serine and threonine residues.

Its subcellular location is the cytoplasm. The protein localises to the cytoskeleton. It localises to the perinuclear region. It is found in the cell projection. The protein resides in the stereocilium. In terms of biological role, actin-binding protein involved in motile and morphological processes. Inhibits actin polymerization, likely by sequestering G-actin. By capping the barbed ends of filaments, it also regulates motility. Seems to play an important role in clathrin-mediated endocytosis and distribution of endocytic organelles. May play a role in regulating the mature length of the middle and short rows of stereocilia. The sequence is that of Twinfilin-2 (TWF2) from Pongo abelii (Sumatran orangutan).